Consider the following 400-residue polypeptide: General L-amino acid transport system permease protein AapQ (400 aa).

8 helical membrane passes run 29-49 (SIFYQILTIVILVGFVWWVAH), 100-120 (LLVAVTGIFTATIIGFLIGIG), 142-162 (IPPLLVIFFWYLGVLSVLPQP), 188-208 (TGMIAVGIALVIAIVASIIIA), 225-245 (VWTAIALIVGLPLLVFVVSGF), 264-284 (VVGPEFMSLFLALSFYTASFI), 340-360 (NSSLAIAIGFSDLVAVGGTIL), and 367-387 (IEIVCIWGIVYLSLSILTSLF). Positions 96 to 388 (ILNTLLVAVT…SLSILTSLFM (293 aa)) constitute an ABC transmembrane type-1 domain.

The protein belongs to the binding-protein-dependent transport system permease family. HisMQ subfamily.

The protein localises to the cell inner membrane. Functionally, part of a binding-protein-dependent transport system for L-amino acids, affects the uptake as well as efflux of these amino acids. Probably responsible for the translocation of the substrate across the membrane. The chain is General L-amino acid transport system permease protein AapQ (aapQ) from Rhizobium johnstonii (strain DSM 114642 / LMG 32736 / 3841) (Rhizobium leguminosarum bv. viciae).